We begin with the raw amino-acid sequence, 232 residues long: Orotidine 5'-phosphate decarboxylase (232 aa).

Substrate-binding positions include Asp11, Lys32, 59–68 (DLKFHDIPNT), Thr118, Arg180, Gln189, Gly209, and Arg210. The active-site Proton donor is the Lys61.

It belongs to the OMP decarboxylase family. Type 1 subfamily. In terms of assembly, homodimer.

It catalyses the reaction orotidine 5'-phosphate + H(+) = UMP + CO2. It functions in the pathway pyrimidine metabolism; UMP biosynthesis via de novo pathway; UMP from orotate: step 2/2. Its function is as follows. Catalyzes the decarboxylation of orotidine 5'-monophosphate (OMP) to uridine 5'-monophosphate (UMP). This chain is Orotidine 5'-phosphate decarboxylase, found in Gloeothece citriformis (strain PCC 7424) (Cyanothece sp. (strain PCC 7424)).